A 634-amino-acid polypeptide reads, in one-letter code: ATP-dependent clpX-like chaperone, mitochondrial (634 aa).

Residues 1-56 (MSSCGACTCGAAAARLLTTSLTSAQRGISCGRIHVPVLGRLGTTLDAQALRRAPLR) constitute a mitochondrion transit peptide. Positions 69–102 (DGANKDGSGDGNKKSVTEGSSKKSGSGNSGKGGN) are disordered. Positions 70 to 84 (GANKDGSGDGNKKSV) are enriched in basic and acidic residues. Positions 85–94 (TEGSSKKSGS) are enriched in low complexity. Positions 94–147 (SGNSGKGGNQLRCPKCGDLCTHVETFVSSTRFVKCEKCHHFFVVLSEADSKKSI) constitute a ClpX-type ZB domain. Cysteine 106, cysteine 109, cysteine 128, and cysteine 131 together coordinate Zn(2+). 295–302 (PTGSGKTL) lines the ATP pocket. An N6-acetyllysine modification is found at lysine 438. Residues 599–611 (KEPGYIRAPSKES) show a composition bias toward basic and acidic residues. A disordered region spans residues 599-634 (KEPGYIRAPSKESSEEEYDSGVEEDGWPRQADAANS). A compositionally biased stretch (acidic residues) spans 612–623 (SEEEYDSGVEED). A Phosphoserine modification is found at serine 618.

The protein belongs to the ClpX chaperone family. In terms of assembly, homohexamer that forms a ring structure; this hexamerization requires ATP binding. Component of the ClpXP complex formed by the assembly of two CLPP heptameric rings with two CLPX hexameric rings, giving rise to a symmetrical structure with two central CLPP rings flanked by a CLPX ring at either end of the complex. Interacts with TFAM. In terms of tissue distribution, detected in liver (at protein level).

It is found in the mitochondrion. Its subcellular location is the mitochondrion matrix. It localises to the mitochondrion nucleoid. The enzyme catalyses ATP + H2O = ADP + phosphate + H(+). In terms of biological role, ATP-dependent chaperone that functions as an unfoldase. As part of the ClpXP protease complex, it recognizes specific protein substrates, unfolds them using energy derived from ATP hydrolysis, and then translocates them to the proteolytic subunit (CLPP) of the ClpXP complex for degradation. Thanks to its chaperone activity, it also functions in the incorporation of the pyridoxal phosphate cofactor into 5-aminolevulinate synthase, thereby activating 5-aminolevulinate (ALA) synthesis, the first step in heme biosynthesis. This chaperone is also involved in the control of mtDNA nucleoid distribution, by regulating mitochondrial transcription factor A (TFAM) activity. The protein is ATP-dependent clpX-like chaperone, mitochondrial of Mus musculus (Mouse).